The chain runs to 109 residues: FK506-binding protein (109 aa).

Residues 20–108 enclose the PPIase FKBP-type domain; the sequence is GKEITVHYTG…IFEVELLKVY (89 aa).

It belongs to the FKBP-type PPIase family.

It carries out the reaction [protein]-peptidylproline (omega=180) = [protein]-peptidylproline (omega=0). Its activity is regulated as follows. Inhibited by FK506. PPIases accelerate the folding of proteins. The polypeptide is FK506-binding protein (fbp) (Neisseria meningitidis serogroup A / serotype 4A (strain DSM 15465 / Z2491)).